A 367-amino-acid chain; its full sequence is Alpha-2-HS-glycoprotein (367 aa).

The N-terminal stretch at 1–18 (MKSLVLLLCLAQLWGCHS) is a signal peptide. The region spanning 27–133 (YRQPNCDDPE…KFSVVYAKCD (107 aa)) is the Cystatin fetuin-A-type 1 domain. 6 cysteine pairs are disulfide-bonded: cysteine 32–cysteine 358, cysteine 89–cysteine 100, cysteine 114–cysteine 132, cysteine 146–cysteine 149, cysteine 208–cysteine 219, and cysteine 230–cysteine 247. Phosphoserine is present on serine 134. Phosphoserine; by FAM20C occurs at positions 135 and 138. Residues 144 to 255 (KVCQDCPLLA…TCMVFQTQPV (112 aa)) form the Cystatin fetuin-A-type 2 domain. N-linked (GlcNAc...) (complex) asparagine glycosylation is found at asparagine 156 and asparagine 176. The tract at residues 255–298 (VSSQPQPEGANEAVPTPVVDPDAPPSPPLGAPGLPPAGSPPDSH) is disordered. O-linked (GalNAc...) threonine glycosylation is present at threonine 270. Over residues 276-293 (DAPPSPPLGAPGLPPAGS) the composition is skewed to pro residues. O-linked (GalNAc...) serine glycans are attached at residues serine 280 and serine 293. A propeptide spans 301-340 (LAAPPGHQLHRAHYDLRHTFMGVVSLGSPSGEVSHPRKTR) (connecting peptide). A Phosphothreonine; by FAM20C modification is found at threonine 319. 3 positions are modified to phosphoserine; by FAM20C: serine 325, serine 328, and serine 330. O-linked (GalNAc...) threonine glycosylation is found at threonine 339 and threonine 341. A glycan (O-linked (GalNAc...) serine) is linked at serine 346.

The protein belongs to the fetuin family. Alpha-2-HS glycoprotein derives from this precursor, when the connecting peptide is cleaved off. The two chains A and B are held together by a single disulfide bond. Phosphorylated by FAM20C in the extracellular medium. Post-translationally, O- and N-glycosylated. O-glycosylated with core 1 or possibly core 8 glycans. N-glycan at Asn-156: Hex5HexNAc4; N-glycan heterogeneity at Asn-176: Hex5HexNAc4 (major) and Hex6HexNAc5 (minor). In terms of tissue distribution, synthesized in liver and selectively concentrated in bone matrix. Secreted in plasma. It is also found in dentin in much higher quantities than other plasma proteins.

It is found in the secreted. Promotes endocytosis, possesses opsonic properties and influences the mineral phase of bone. Shows affinity for calcium and barium ions. This Homo sapiens (Human) protein is Alpha-2-HS-glycoprotein (AHSG).